Here is a 158-residue protein sequence, read N- to C-terminus: Crossover junction endodeoxyribonuclease RuvC (158 aa).

Residues D7, E66, and D139 contribute to the active site. Residues D7, E66, and D139 each coordinate Mg(2+).

The protein belongs to the RuvC family. As to quaternary structure, homodimer which binds Holliday junction (HJ) DNA. The HJ becomes 2-fold symmetrical on binding to RuvC with unstacked arms; it has a different conformation from HJ DNA in complex with RuvA. In the full resolvosome a probable DNA-RuvA(4)-RuvB(12)-RuvC(2) complex forms which resolves the HJ. Requires Mg(2+) as cofactor.

The protein localises to the cytoplasm. The catalysed reaction is Endonucleolytic cleavage at a junction such as a reciprocal single-stranded crossover between two homologous DNA duplexes (Holliday junction).. Functionally, the RuvA-RuvB-RuvC complex processes Holliday junction (HJ) DNA during genetic recombination and DNA repair. Endonuclease that resolves HJ intermediates. Cleaves cruciform DNA by making single-stranded nicks across the HJ at symmetrical positions within the homologous arms, yielding a 5'-phosphate and a 3'-hydroxyl group; requires a central core of homology in the junction. The consensus cleavage sequence is 5'-(A/T)TT(C/G)-3'. Cleavage occurs on the 3'-side of the TT dinucleotide at the point of strand exchange. HJ branch migration catalyzed by RuvA-RuvB allows RuvC to scan DNA until it finds its consensus sequence, where it cleaves and resolves the cruciform DNA. In Campylobacter jejuni subsp. jejuni serotype O:6 (strain 81116 / NCTC 11828), this protein is Crossover junction endodeoxyribonuclease RuvC.